A 508-amino-acid polypeptide reads, in one-letter code: Endoglucanase 6 (508 aa).

An N-terminal signal peptide occupies residues 1 to 33 (MLAASLRVEAVAVVAAAVLVLLLSPAAVVVVAG). Asp89 serves as the catalytic Nucleophile. Residues His419, Asp471, and Glu480 contribute to the active site.

Belongs to the glycosyl hydrolase 9 (cellulase E) family.

Its subcellular location is the secreted. The enzyme catalyses Endohydrolysis of (1-&gt;4)-beta-D-glucosidic linkages in cellulose, lichenin and cereal beta-D-glucans.. This chain is Endoglucanase 6, found in Oryza sativa subsp. japonica (Rice).